The following is a 211-amino-acid chain: uncharacterized protein (211 aa).

7 residues coordinate Zn(2+): H54, H56, D58, H59, H129, D148, and H189.

The protein belongs to the metallo-beta-lactamase superfamily. Glyoxalase II family. Zn(2+) serves as cofactor.

This is an uncharacterized protein from Aquifex aeolicus (strain VF5).